A 249-amino-acid polypeptide reads, in one-letter code: Phosphate import ATP-binding protein PstB 3 (249 aa).

One can recognise an ABC transporter domain in the interval 4–244 (LVINNLDLYY…PQDERTENYI (241 aa)). Position 36-43 (36-43 (GPSGCGKS)) interacts with ATP.

Belongs to the ABC transporter superfamily. Phosphate importer (TC 3.A.1.7) family. As to quaternary structure, the complex is composed of two ATP-binding proteins (PstB), two transmembrane proteins (PstC and PstA) and a solute-binding protein (PstS).

The protein localises to the cell membrane. The enzyme catalyses phosphate(out) + ATP + H2O = ADP + 2 phosphate(in) + H(+). In terms of biological role, part of the ABC transporter complex PstSACB involved in phosphate import. Responsible for energy coupling to the transport system. The protein is Phosphate import ATP-binding protein PstB 3 of Streptococcus agalactiae serotype Ia (strain ATCC 27591 / A909 / CDC SS700).